Here is a 243-residue protein sequence, read N- to C-terminus: Segregation and condensation protein A (243 aa).

It belongs to the ScpA family. Component of a cohesin-like complex composed of ScpA, ScpB and the Smc homodimer, in which ScpA and ScpB bind to the head domain of Smc. The presence of the three proteins is required for the association of the complex with DNA.

It is found in the cytoplasm. In terms of biological role, participates in chromosomal partition during cell division. May act via the formation of a condensin-like complex containing Smc and ScpB that pull DNA away from mid-cell into both cell halves. This chain is Segregation and condensation protein A, found in Thermoanaerobacter pseudethanolicus (strain ATCC 33223 / 39E) (Clostridium thermohydrosulfuricum).